The primary structure comprises 241 residues: Protein TraL (241 aa).

This sequence to plasmid IncP-alpha RP4 TraL.

This Escherichia coli protein is Protein TraL (traL).